The chain runs to 475 residues: Cysteine--tRNA ligase (475 aa).

Residue Cys-28 coordinates Zn(2+). Residues 30-40 (PTVYDETHIGH) carry the 'HIGH' region motif. Positions 208, 233, and 237 each coordinate Zn(2+). A 'KMSKS' region motif is present at residues 265 to 269 (KMSKS). Lys-268 serves as a coordination point for ATP.

Belongs to the class-I aminoacyl-tRNA synthetase family. Requires Zn(2+) as cofactor.

It is found in the cytoplasm. The catalysed reaction is tRNA(Cys) + L-cysteine + ATP = L-cysteinyl-tRNA(Cys) + AMP + diphosphate. This chain is Cysteine--tRNA ligase, found in Methanococcus vannielii (strain ATCC 35089 / DSM 1224 / JCM 13029 / OCM 148 / SB).